A 470-amino-acid polypeptide reads, in one-letter code: A-type ATP synthase subunit B (470 aa).

Belongs to the ATPase alpha/beta chains family. As to quaternary structure, has multiple subunits with at least A(3), B(3), C, D, E, F, H, I and proteolipid K(x).

The protein localises to the cell membrane. Its function is as follows. Component of the A-type ATP synthase that produces ATP from ADP in the presence of a proton gradient across the membrane. The B chain is a regulatory subunit. This Haloarcula marismortui (strain ATCC 43049 / DSM 3752 / JCM 8966 / VKM B-1809) (Halobacterium marismortui) protein is A-type ATP synthase subunit B.